The sequence spans 284 residues: Isopentenyl-diphosphate Delta-isomerase II, chloroplastic (284 aa).

A chloroplast-targeting transit peptide spans 1–45 (MSASSLFNLPLIRLRSLALSSSFSSFRFAHRPLSSISPRKLPNFR). N-acetylalanine is present on alanine 46. Lysine 88 is a substrate binding site. The Mg(2+) site is built by histidine 92 and histidine 104. The Nudix hydrolase domain occupies 102–254 (LLHRAFSVFL…GLKLSPWFRL (153 aa)). Arginine 123 and lysine 127 together coordinate substrate. The active site involves cysteine 139. Serine 140 contributes to the substrate binding site. A Nudix box motif is present at residues 140 to 170 (SHPLYRESELIQDNALGVRNAAQRKLLDELG). Residues glutamate 199 and glutamate 201 each contribute to the Mg(2+) site. Residue glutamate 201 is part of the active site.

Belongs to the IPP isomerase type 1 family. Mg(2+) is required as a cofactor.

The protein localises to the plastid. Its subcellular location is the chloroplast. It catalyses the reaction isopentenyl diphosphate = dimethylallyl diphosphate. It functions in the pathway isoprenoid biosynthesis; dimethylallyl diphosphate biosynthesis; dimethylallyl diphosphate from isopentenyl diphosphate: step 1/1. It participates in porphyrin-containing compound metabolism; chlorophyll biosynthesis. Functionally, catalyzes the 1,3-allylic rearrangement of the homoallylic substrate isopentenyl (IPP) to its highly electrophilic allylic isomer, dimethylallyl diphosphate (DMAPP). This Arabidopsis thaliana (Mouse-ear cress) protein is Isopentenyl-diphosphate Delta-isomerase II, chloroplastic (IPP2).